A 794-amino-acid chain; its full sequence is MNIDDKLEGLFLKCGGIDEMQSSRTMVVMGGVSGQSTVSGELQDSVLQDRSMPHQEILAADEVLQESEMRQQDMISHDELMVHEETVKNDEEQMETHERLPQGLQYALNVPISVKQEITFTDVSEQLMRDKKQIREPVDLQKKKKRKQRSPAKILTINEDGSLGLKTPKSHVCEHCNAAFRTNYHLQRHVFIHTGEKPFQCSQCDMRFIQKYLLQRHEKIHTGEKPFRCDECGMRFIQKYHMERHKRTHSGEKPYQCEYCLQYFSRTDRVLKHKRMCHENHDKKLNRCAIKGGLLTSEEDSGFSTSPKDNSLPKKKRQKTEKKSSGMDKESALDKSDLKKDKNDYLPLYSSSTKVKDEYMVAEYAVEMPHSSVGGSHLEDASGEIHPPKLVLKKINSKRSLKQPLEQNQTISPLSTYEESKVSKYAFELVDKQALLDSEGNADIDQVDNLQEGPSKPVHSSTNYDDAMQFLKKKRYLQAASNNSREYALNVGTIASQPSVTQAAVASVIDESTTASILESQALNVEIKSNHDKNVIPDEVLQTLLDHYSHKANGQHEISFSVADTEVTSSISINSSEVPEVTPSENVGSSSQASSSDKANMLQEYSKFLQQALDRTSQNDAYLNSPSLNFVTDNQTLPNQPAFSSIDKQVYATMPINSFRSGMNSPLRTTPDKSHFGLIVGDSQHSFPFSGDETNHASATSTQDFLDQVTSQKKAEAQPVHQAYQMSSFEQPFRAPYHGSRAGIATQFSTANGQVNLRGPGTSAEFSEFPLVNVNDNRAGMTSSPDATTGQTFG.

A Glycyl lysine isopeptide (Lys-Gly) (interchain with G-Cter in SUMO2) cross-link involves residue K6. S51 carries the post-translational modification Phosphoserine. Residues K88, K115, and K132 each participate in a glycyl lysine isopeptide (Lys-Gly) (interchain with G-Cter in SUMO2) cross-link. The C2H2-type 1 zinc finger occupies 171 to 193 (HVCEHCNAAFRTNYHLQRHVFIH). T194 is subject to Phosphothreonine. 2 C2H2-type zinc fingers span residues 199–221 (FQCS…EKIH) and 227–249 (FRCD…KRTH). S250 carries the phosphoserine modification. The C2H2-type 4 zinc finger occupies 255–278 (YQCEYCLQYFSRTDRVLKHKRMCH). K291 is covalently cross-linked (Glycyl lysine isopeptide (Lys-Gly) (interchain with G-Cter in SUMO2)). The tract at residues 298–336 (EEDSGFSTSPKDNSLPKKKRQKTEKKSSGMDKESALDKS) is disordered. S301 and S306 each carry phosphoserine. K308 participates in a covalent cross-link: Glycyl lysine isopeptide (Lys-Gly) (interchain with G-Cter in SUMO2). Positions 321-336 (EKKSSGMDKESALDKS) are enriched in basic and acidic residues. K356 is covalently cross-linked (Glycyl lysine isopeptide (Lys-Gly) (interchain with G-Cter in SUMO1); alternate). K356 participates in a covalent cross-link: Glycyl lysine isopeptide (Lys-Gly) (interchain with G-Cter in SUMO2); alternate. Residue K402 forms a Glycyl lysine isopeptide (Lys-Gly) (interchain with G-Cter in SUMO2) linkage. A Phosphoserine modification is found at S412. Glycyl lysine isopeptide (Lys-Gly) (interchain with G-Cter in SUMO2) cross-links involve residues K421 and K424. Residues 574–588 (NSSEVPEVTPSENVG) show a composition bias toward polar residues. A disordered region spans residues 574–596 (NSSEVPEVTPSENVGSSSQASSS). K607 carries the post-translational modification N6-acetyllysine. Phosphoserine occurs at positions 665 and 784.

The protein belongs to the krueppel C2H2-type zinc-finger protein family. Interacts with HNRNPDL. Interacts with the 5FMC complex; the interaction requires association with CHTOP. Interacts with CAVIN1. Sumoylated with SUMO2. Desumoylated by SENP3, resulting in the stimulation of transcription of its target genes.

It is found in the nucleus. In terms of biological role, involved in transcriptional regulation. Represses the transcription of a number of genes including gastrin, stromelysin and enolase. Binds to the G-rich box in the enhancer region of these genes. The polypeptide is Zinc finger protein 148 (ZNF148) (Homo sapiens (Human)).